Reading from the N-terminus, the 287-residue chain is Hydroxysteroid 11-beta-dehydrogenase 1-like protein (287 aa).

An N-terminal signal peptide occupies residues 1 to 20 (MMKPFGKVLCAAGSLAVLLA). NADP(+)-binding positions include 41-67 (GASAGIGEQMAYHYATFGAEIVLTARR), 92-93 (DM), and 119-121 (NHI). Serine 170 is a binding site for substrate. Catalysis depends on tyrosine 183, which acts as the Proton acceptor. NADP(+) is bound by residues 183 to 187 (YSATK) and 216 to 222 (GLIDTDA).

The protein belongs to the short-chain dehydrogenases/reductases (SDR) family.

It localises to the secreted. The catalysed reaction is cortisone + NADPH + H(+) = cortisol + NADP(+). Its function is as follows. Unidirectional NADP(+)-dependent cortisol dehydrogenase (in vitro). This Gallus gallus (Chicken) protein is Hydroxysteroid 11-beta-dehydrogenase 1-like protein (HSD11B1L).